We begin with the raw amino-acid sequence, 337 residues long: Anthranilate phosphoribosyltransferase (337 aa).

5-phospho-alpha-D-ribose 1-diphosphate is bound by residues Gly80, 83–84 (GD), Thr88, 90–93 (NIST), 108–116 (KHGNRSVSS), and Ser120. Residue Gly80 participates in anthranilate binding. Mg(2+) is bound at residue Ser92. Residue Asn111 coordinates anthranilate. Arg166 is a binding site for anthranilate. Mg(2+) contacts are provided by Asp225 and Glu226.

The protein belongs to the anthranilate phosphoribosyltransferase family. In terms of assembly, homodimer. Mg(2+) serves as cofactor.

The catalysed reaction is N-(5-phospho-beta-D-ribosyl)anthranilate + diphosphate = 5-phospho-alpha-D-ribose 1-diphosphate + anthranilate. It functions in the pathway amino-acid biosynthesis; L-tryptophan biosynthesis; L-tryptophan from chorismate: step 2/5. Catalyzes the transfer of the phosphoribosyl group of 5-phosphorylribose-1-pyrophosphate (PRPP) to anthranilate to yield N-(5'-phosphoribosyl)-anthranilate (PRA). In Syntrophobacter fumaroxidans (strain DSM 10017 / MPOB), this protein is Anthranilate phosphoribosyltransferase.